The sequence spans 354 residues: Membrane progestin receptor alpha-B (354 aa).

The Cytoplasmic segment spans residues 1–76; sequence MATVVMEQIG…LTLFQRHNES (76 aa). The helical transmembrane segment at 77–97 threads the bilayer; sequence VNVWTHLLASLIILVKFQELS. Residues 98–110 lie on the Extracellular side of the membrane; that stretch reads ETVDFLRDPHAQP. A helical membrane pass occupies residues 111-131; that stretch reads MFILLLAAFTYLGCSALAHLL. Residues 132-141 are Cytoplasmic-facing; the sequence is SAKSEISHYT. Residues 142-162 form a helical membrane-spanning segment; sequence FYFLDYVGVAVYQYGSALAHF. Topologically, residues 163-175 are extracellular; the sequence is YYVVEEEWHAQVR. Residues 176 to 196 form a helical membrane-spanning segment; sequence TFFLPASAFLAWLSCTGCCYG. Over 197–244 the chain is Cytoplasmic; the sequence is KYASPKLPKFVHKLFQVVPSGLAYCLDISPVLHRIYRCYSSEHWCADQ. The chain crosses the membrane as a helical span at residues 245 to 265; it reads AVVYHCYQVLFFLISAYFFSY. The Extracellular segment spans residues 266-277; sequence PHPERWFPGRCD. Residues 278-298 traverse the membrane as a helical segment; sequence FIGQGHQIFHVFLVLCTLVQI. Residues 299 to 318 are Cytoplasmic-facing; that stretch reads EAVRLDYTERRRLYEHLHGD. A helical transmembrane segment spans residues 319 to 339; it reads LAHDAVALFIFTACCSALTAF. The Extracellular portion of the chain corresponds to 340 to 354; that stretch reads YVRKRVKTYLEEKQE.

It belongs to the ADIPOR family.

It localises to the cell membrane. Its function is as follows. Steroid membrane receptor. Signals upon progestin binding, resulting in rapid activation of MAPK and down-regulation of adenylyl cyclase activity. Interacts with steroids with varying degrees of affinity, showing specificity for activation by the maturation-inducing steroid (MIS) 4-pregnen-17,20beta-diol-3-one (17,20beta-DHP). Capable of mediating progestin-induced oocyte maturation. The sequence is that of Membrane progestin receptor alpha-B (paqr7b) from Danio rerio (Zebrafish).